We begin with the raw amino-acid sequence, 114 residues long: Holo-[acyl-carrier-protein] synthase (114 aa).

Residues Asp8 and Glu58 each coordinate Mg(2+).

The protein belongs to the P-Pant transferase superfamily. AcpS family. It depends on Mg(2+) as a cofactor.

It is found in the cytoplasm. It carries out the reaction apo-[ACP] + CoA = holo-[ACP] + adenosine 3',5'-bisphosphate + H(+). In terms of biological role, transfers the 4'-phosphopantetheine moiety from coenzyme A to a Ser of acyl-carrier-protein. The sequence is that of Holo-[acyl-carrier-protein] synthase from Mycoplasma genitalium (strain ATCC 33530 / DSM 19775 / NCTC 10195 / G37) (Mycoplasmoides genitalium).